The primary structure comprises 65 residues: Small ribosomal subunit protein bS21 (65 aa).

Residues 45–65 (GRLKRSRSRRRAQRANEERNS) are disordered. The segment covering 48 to 57 (KRSRSRRRAQ) has biased composition (basic residues).

It belongs to the bacterial ribosomal protein bS21 family.

This chain is Small ribosomal subunit protein bS21, found in Chlorobium phaeobacteroides (strain DSM 266 / SMG 266 / 2430).